The sequence spans 1145 residues: Protocadherin-19 (1145 aa).

The first 21 residues, 1–21 (MESLLLPVLLLLAVLWTQAAA), serve as a signal peptide directing secretion. Cadherin domains are found at residues 22–129 (LINL…APSF), 130–238 (PAAQ…NPVF), 239–346 (GEST…PPII), 350–453 (SVNS…HPHF), 454–563 (SKPY…TPVI), and 569–672 (INGT…QESM). At 22 to 678 (LINLKYSVEE…QESMGSVNLS (657 aa)) the chain is on the extracellular side. Residues E31, E32, D88, and D90 each contribute to the Ca(2+) site. The cysteines at positions 93 and 99 are disulfide-linked. Residues D121, N123, D124, N125, E140, D155, D157, E199, D212, D230, S231, N232, D233, N234, and E249 each contribute to the Ca(2+) site. N261 carries an N-linked (GlcNAc...) asparagine glycan. D264, D266, N270, D305, E307, D338, N340, D341, N342, E360, D375, D377, N381, D412, and E414 together coordinate Ca(2+). N-linked (GlcNAc...) asparagine glycosylation occurs at N420. Positions 427, 445, 446, 447, 448, 449, 464, 479, 481, 485, 522, 524, and 537 each coordinate Ca(2+). A glycan (N-linked (GlcNAc...) asparagine) is linked at N485. N-linked (GlcNAc...) asparagine glycosylation is present at N546. The Ca(2+) site is built by D555, V556, N557, D558, and N559. Residue N570 is glycosylated (N-linked (GlcNAc...) asparagine). 4 residues coordinate Ca(2+): D594, D596, N600, and D646. The N-linked (GlcNAc...) asparagine glycan is linked to N676. A helical transmembrane segment spans residues 679–699 (LIFIIALGSIAGILFVTMIFV). The Cytoplasmic segment spans residues 700 to 1145 (AIKCKRDNKE…SVKRLKDIVL (446 aa)). Disordered stretches follow at residues 901–921 (GNSL…EHDV) and 1094–1145 (LEHH…DIVL). Basic and acidic residues-rich tracts occupy residues 906–921 (DSGH…EHDV) and 1106–1145 (SEAE…DIVL).

As to quaternary structure, homodimer; antiparallel.

The protein resides in the cell membrane. In terms of biological role, calcium-dependent cell-adhesion protein. This is Protocadherin-19 (Pcdh19) from Mus musculus (Mouse).